The following is a 266-amino-acid chain: Hydroxyethylthiazole kinase (266 aa).

Methionine 43 is a substrate binding site. 2 residues coordinate ATP: arginine 119 and threonine 166. Substrate is bound at residue glycine 193.

Belongs to the Thz kinase family. It depends on Mg(2+) as a cofactor.

It catalyses the reaction 5-(2-hydroxyethyl)-4-methylthiazole + ATP = 4-methyl-5-(2-phosphooxyethyl)-thiazole + ADP + H(+). It participates in cofactor biosynthesis; thiamine diphosphate biosynthesis; 4-methyl-5-(2-phosphoethyl)-thiazole from 5-(2-hydroxyethyl)-4-methylthiazole: step 1/1. Catalyzes the phosphorylation of the hydroxyl group of 4-methyl-5-beta-hydroxyethylthiazole (THZ). The protein is Hydroxyethylthiazole kinase of Methanococcus vannielii (strain ATCC 35089 / DSM 1224 / JCM 13029 / OCM 148 / SB).